A 1373-amino-acid polypeptide reads, in one-letter code: DNA-directed RNA polymerase subunit beta (1373 aa).

It belongs to the RNA polymerase beta chain family. As to quaternary structure, the RNAP catalytic core consists of 2 alpha, 1 beta, 1 beta' and 1 omega subunit. When a sigma factor is associated with the core the holoenzyme is formed, which can initiate transcription.

The catalysed reaction is RNA(n) + a ribonucleoside 5'-triphosphate = RNA(n+1) + diphosphate. DNA-dependent RNA polymerase catalyzes the transcription of DNA into RNA using the four ribonucleoside triphosphates as substrates. The polypeptide is DNA-directed RNA polymerase subunit beta (Rickettsia massiliae).